Consider the following 445-residue polypeptide: Methionine aminopeptidase 2 (445 aa).

The segment at 1–89 (MAAQAPVDEI…DPPRVLISQL (89 aa)) is disordered. Over residues 60–74 (AKKKKKRKPKKKKKN) the composition is skewed to basic residues. His198 contributes to the substrate binding site. 3 residues coordinate a divalent metal cation: Asp218, Asp229, and His298. His306 contributes to the substrate binding site. Positions 331 and 426 each coordinate a divalent metal cation.

This sequence belongs to the peptidase M24A family. Methionine aminopeptidase eukaryotic type 2 subfamily. The cofactor is Co(2+). Requires Zn(2+) as cofactor. Mn(2+) is required as a cofactor. It depends on Fe(2+) as a cofactor.

The protein localises to the cytoplasm. It catalyses the reaction Release of N-terminal amino acids, preferentially methionine, from peptides and arylamides.. Cotranslationally removes the N-terminal methionine from nascent proteins. The N-terminal methionine is often cleaved when the second residue in the primary sequence is small and uncharged (Met-Ala-, Cys, Gly, Pro, Ser, Thr, or Val). The chain is Methionine aminopeptidase 2 from Podospora anserina (strain S / ATCC MYA-4624 / DSM 980 / FGSC 10383) (Pleurage anserina).